Reading from the N-terminus, the 350-residue chain is Ion-translocating oxidoreductase complex subunit D (350 aa).

3 consecutive transmembrane segments (helical) span residues Ile-20–Phe-39, Ile-89–Ala-109, and Pro-123–Leu-143. An FMN phosphoryl threonine modification is found at Thr-187. The next 5 helical transmembrane spans lie at Leu-215–Leu-235, Ile-244–Pro-264, Phe-267–Leu-287, Leu-301–Pro-321, and Asp-322–Thr-342.

This sequence belongs to the NqrB/RnfD family. As to quaternary structure, the complex is composed of six subunits: RnfA, RnfB, RnfC, RnfD, RnfE and RnfG. It depends on FMN as a cofactor.

Its subcellular location is the cell inner membrane. In terms of biological role, part of a membrane-bound complex that couples electron transfer with translocation of ions across the membrane. This Cronobacter sakazakii (strain ATCC BAA-894) (Enterobacter sakazakii) protein is Ion-translocating oxidoreductase complex subunit D.